A 667-amino-acid polypeptide reads, in one-letter code: Polypeptide N-acetylgalactosaminyltransferase 3 (667 aa).

The Cytoplasmic segment spans residues 1 to 12 (MGLRFQQLKKLW). A helical; Signal-anchor for type II membrane protein transmembrane segment spans residues 13–35 (LLYLFLLFFAFFMFAISINLYVA). Over 36-667 (SIQGGDAEMR…WGFIPLPWRM (632 aa)) the chain is Lumenal. 2 N-linked (GlcNAc...) asparagine glycosylation sites follow: Asn75 and Asn129. 5 disulfide bridges follow: Cys140–Cys375, Cys366–Cys446, Cys526–Cys547, Cys572–Cys601, and Cys626–Cys649. Residues 149-259 (LPSTSVIIVF…RGWLEPLLSR (111 aa)) are catalytic subdomain A. Asp190 and Arg220 together coordinate substrate. Residues Asp243 and His245 each coordinate Mn(2+). 2 N-linked (GlcNAc...) asparagine glycosylation sites follow: Asn279 and Asn313. A catalytic subdomain B region spans residues 321–383 (PIATPGMAGG…PCSHVGHVFR (63 aa)). Trp352 lines the substrate pocket. His380 is a binding site for Mn(2+). Positions 383 and 388 each coordinate substrate. An N-linked (GlcNAc...) asparagine glycan is attached at Asn433. Positions 513-661 (EELMALIDLE…KDITQKWGFI (149 aa)) constitute a Ricin B-type lectin domain. Asn590 is a glycosylation site (N-linked (GlcNAc...) asparagine).

Belongs to the glycosyltransferase 2 family. GalNAc-T subfamily. The cofactor is Mn(2+). Expressed in developing oocytes and egg chambers. During embryonic stages 9-11, expressed in the primordiums of the foregut, midgut and hindgut. During embryonic stages 12-13, expression is found uniquely in the posterior spiracle. During embryonic stages 14-17, expressed in the pharynx, esophagus and posterior spiracles. Expression observed in the epidermis during embryonic stages 16-17. In third instar larvae, expressed ubiquitously in wing, with increased expression in pleura and notum, eye-antennal, leg and haltere imaginal disks.

The protein resides in the golgi apparatus membrane. It catalyses the reaction L-seryl-[protein] + UDP-N-acetyl-alpha-D-galactosamine = a 3-O-[N-acetyl-alpha-D-galactosaminyl]-L-seryl-[protein] + UDP + H(+). The enzyme catalyses L-threonyl-[protein] + UDP-N-acetyl-alpha-D-galactosamine = a 3-O-[N-acetyl-alpha-D-galactosaminyl]-L-threonyl-[protein] + UDP + H(+). Its pathway is protein modification; protein glycosylation. In terms of biological role, catalyzes the initial reaction in O-linked oligosaccharide biosynthesis, the transfer of an N-acetyl-D-galactosamine residue to a serine or threonine residue on the protein receptor. It can both act as a peptide transferase that transfers GalNAc onto unmodified peptide substrates, and as a glycopeptide transferase that requires the prior addition of a GalNAc on a peptide before adding additional GalNAc moieties. Prefers EA2 as substrate. Has weak activity toward Muc5AC-3, -13 and -3/13 substrates. Plays a critical role in the regulation of integrin-mediated cell adhesion during wing development by influencing, via glycosylation, the secretion and localization of the integrin ligand Tig to the basal cell layer interface. Might have a role in protein O-glycosylation in the Golgi and thereby in establishing and/or maintaining a proper secretory apparatus structure. Together with Pgant35A, regulates integrin levels and activity-dependent integrin signaling at the synapse in neurons and muscles. The protein is Polypeptide N-acetylgalactosaminyltransferase 3 of Drosophila melanogaster (Fruit fly).